A 430-amino-acid chain; its full sequence is Enolase (430 aa).

(2R)-2-phosphoglycerate is bound at residue Gln-163. Glu-205 serves as the catalytic Proton donor. Asp-242, Glu-287, and Asp-314 together coordinate Mg(2+). (2R)-2-phosphoglycerate-binding residues include Lys-339, Arg-368, Ser-369, and Lys-390. Lys-339 functions as the Proton acceptor in the catalytic mechanism.

Belongs to the enolase family. Mg(2+) serves as cofactor.

It localises to the cytoplasm. The protein resides in the secreted. It is found in the cell surface. The enzyme catalyses (2R)-2-phosphoglycerate = phosphoenolpyruvate + H2O. It participates in carbohydrate degradation; glycolysis; pyruvate from D-glyceraldehyde 3-phosphate: step 4/5. In terms of biological role, catalyzes the reversible conversion of 2-phosphoglycerate (2-PG) into phosphoenolpyruvate (PEP). It is essential for the degradation of carbohydrates via glycolysis. This Bacillus cytotoxicus (strain DSM 22905 / CIP 110041 / 391-98 / NVH 391-98) protein is Enolase.